The primary structure comprises 179 residues: Tetratricopeptide repeat protein 36 (179 aa).

TPR repeat units follow at residues 43 to 76 (SLQL…CPKN), 78 to 110 (SAYN…AGPK), and 115 to 148 (CQAY…GSSF).

Belongs to the TTC36 family.

This Caenorhabditis elegans protein is Tetratricopeptide repeat protein 36.